Here is a 1109-residue protein sequence, read N- to C-terminus: Carbamoyl phosphate synthase large chain (1109 aa).

The interval 1 to 402 is carboxyphosphate synthetic domain; it reads MPRRTDLTSV…ALQKAMRSID (402 aa). ATP-binding residues include arginine 129, arginine 169, glycine 175, glycine 176, glutamate 208, isoleucine 210, glutamate 215, glycine 241, valine 242, histidine 243, glutamine 285, and glutamate 299. The region spanning 133–328 is the ATP-grasp 1 domain; it reads KGVVERCGAE…IAKIAARLAV (196 aa). Positions 285, 299, and 301 each coordinate Mg(2+). Mn(2+)-binding residues include glutamine 285, glutamate 299, and asparagine 301. The tract at residues 403–548 is oligomerization domain; it reads KAGSTFHWRG…YHYSSYDAET (146 aa). Positions 549 to 956 are carbamoyl phosphate synthetic domain; sequence EVQPRDRPAV…AFAKSQAAAY (408 aa). An ATP-grasp 2 domain is found at 678 to 876; it reads GEVLVAAGLP…LAKAASLLMA (199 aa). Residues arginine 714, arginine 760, leucine 762, glutamate 767, glycine 792, isoleucine 793, histidine 794, serine 795, glutamine 835, and glutamate 847 each contribute to the ATP site. Mg(2+) contacts are provided by glutamine 835, glutamate 847, and asparagine 849. Mn(2+) contacts are provided by glutamine 835, glutamate 847, and asparagine 849. Residues 957-1102 enclose the MGS-like domain; that stretch reads GGLPTSGRVF…QEHDAARAAR (146 aa). Residues 957–1109 are allosteric domain; that stretch reads GGLPTSGRVF…AARETEGVHA (153 aa).

Belongs to the CarB family. Composed of two chains; the small (or glutamine) chain promotes the hydrolysis of glutamine to ammonia, which is used by the large (or ammonia) chain to synthesize carbamoyl phosphate. Tetramer of heterodimers (alpha,beta)4. Mg(2+) is required as a cofactor. Requires Mn(2+) as cofactor.

It carries out the reaction hydrogencarbonate + L-glutamine + 2 ATP + H2O = carbamoyl phosphate + L-glutamate + 2 ADP + phosphate + 2 H(+). The catalysed reaction is hydrogencarbonate + NH4(+) + 2 ATP = carbamoyl phosphate + 2 ADP + phosphate + 2 H(+). It participates in amino-acid biosynthesis; L-arginine biosynthesis; carbamoyl phosphate from bicarbonate: step 1/1. Its pathway is pyrimidine metabolism; UMP biosynthesis via de novo pathway; (S)-dihydroorotate from bicarbonate: step 1/3. In terms of biological role, large subunit of the glutamine-dependent carbamoyl phosphate synthetase (CPSase). CPSase catalyzes the formation of carbamoyl phosphate from the ammonia moiety of glutamine, carbonate, and phosphate donated by ATP, constituting the first step of 2 biosynthetic pathways, one leading to arginine and/or urea and the other to pyrimidine nucleotides. The large subunit (synthetase) binds the substrates ammonia (free or transferred from glutamine from the small subunit), hydrogencarbonate and ATP and carries out an ATP-coupled ligase reaction, activating hydrogencarbonate by forming carboxy phosphate which reacts with ammonia to form carbamoyl phosphate. This chain is Carbamoyl phosphate synthase large chain, found in Beutenbergia cavernae (strain ATCC BAA-8 / DSM 12333 / CCUG 43141 / JCM 11478 / NBRC 16432 / NCIMB 13614 / HKI 0122).